Here is a 57-residue protein sequence, read N- to C-terminus: uncharacterized protein (57 aa).

Belongs to the ycf18/nblA family.

It is found in the plastid. Its subcellular location is the chloroplast. This is an uncharacterized protein from Aglaothamnion neglectum (Red alga).